An 856-amino-acid polypeptide reads, in one-letter code: Centrosomal protein of 97 kDa (856 aa).

LRR repeat units follow at residues 37 to 58 (DVHT…EKCK), 59 to 80 (QLIQ…AKLT), 81 to 102 (QLRV…KDLV), 103 to 124 (HLEW…NSCT), 125 to 146 (ALQH…SKLI), 147 to 168 (SLKT…PAYL), 171 to 192 (NLSI…SFLA), and 196 to 205 (ELEQLSIMNN). The region spanning 211 to 249 (TPSIPGFDYRPFIVSWCLNLRVLDGYVISQKESLKAEWL) is the LRRCT domain. The interval 300–742 (HQRQLMSQSQ…KCVKDRDSEA (443 aa)) is CCP110-binding. S308 and S410 each carry phosphoserine. The disordered stretch occupies residues 430–451 (DDGADEFTKGLENQDEDKDKEK). Phosphoserine is present on S497. The span at 498-513 (LTSLPESAGHSASRTE) shows a compositional bias: polar residues. Positions 498–525 (LTSLPESAGHSASRTEANSEEAMSPATS) are disordered. S521 bears the Phosphoserine mark. At T534 the chain carries Phosphothreonine. In terms of domain architecture, IQ spans 550 to 579 (LNAAATKLQACWRGFYTRNYNQQAKGVRYE). The interaction with MPHOSPH9 stretch occupies residues 579-853 (EIRLRRMQEH…FQGLHVGVTV (275 aa)). Disordered regions lie at residues 646–672 (PPIS…DQSS) and 737–840 (DRDS…PPEC). Over residues 737 to 752 (DRDSEATAEEHSDCSR) the composition is skewed to basic and acidic residues. Polar residues predominate over residues 753 to 773 (ESSASEQDNTLLQQYLTSVQQ). S755 carries the post-translational modification Phosphoserine. The segment covering 776–787 (DAAEAADSDDVA) has biased composition (acidic residues). The span at 799–811 (ERFDASSDSETHR) shows a compositional bias: basic and acidic residues. Residues 812–833 (VASTSQDEISQTPENCQLNEEA) show a composition bias toward polar residues.

In terms of assembly, interacts with CALM1, CEP76, KIF24 and TALPID3. Interacts with CCP110. ENKD1 competes with CEP97 for binding to CCP110, destabilizing the interaction between CP110 and CEP97 which promotes the removal of CCP110 and CEP97 from the mother centriole and allows the initiation of ciliogenesis. Via its interaction with CCP110, may indirectly interact with HERC2 and NEURL4. Interacts with MPHOSPH9.

It localises to the cytoplasm. It is found in the cytoskeleton. Its subcellular location is the microtubule organizing center. The protein resides in the centrosome. The protein localises to the centriole. Acts as a key negative regulator of ciliogenesis in collaboration with CCP110 by capping the mother centriole thereby preventing cilia formation. Required for recruitment of CCP110 to the centrosome. This Mus musculus (Mouse) protein is Centrosomal protein of 97 kDa (Cep97).